Here is a 410-residue protein sequence, read N- to C-terminus: Protein disulfide isomerase CRELD1 (410 aa).

A signal peptide spans 1–29; the sequence is MGMSRRMFLTVYGSLWLLLLLSRPGVSKP. The Extracellular portion of the chain corresponds to 30–352; that stretch reads QLCQTCQNLV…GLFDDITDDE (323 aa). The CXXC motif lies at 32-35; sequence CQTC. Disulfide bonds link Cys32–Cys35, Cys141–Cys155, Cys149–Cys167, and Cys169–Cys178. Positions 139–179 constitute an EGF-like 1 domain; that stretch reads LSCPGGTEKPCSGNGQCNGDGTRFGTGVCDCYTSYGGPVCM. FU repeat units follow at residues 194–243 and 254–301; these read HLVC…DHCK and SYEC…ELPK. Positions 264-267 match the CXXC motif; the sequence is CIGC. Intrachain disulfides connect Cys264/Cys267, Cys295/Cys309, Cys302/Cys318, and Cys320/Cys331. The EGF-like 2; calcium-binding domain maps to 291–332; sequence DVDECDSELPKCKGSHEECVNTEGSFTCVCEKDYSRIDGMCR. The helical transmembrane segment at 353-373 threads the bilayer; sequence VVVLQQMFFGVVICALATLAA. Lys374 is a topological domain (cytoplasmic). The chain crosses the membrane as a helical span at residues 375-395; that stretch reads GDMVFTAIFIGAVAAMAGYWL. Residues 396–410 lie on the Extracellular side of the membrane; it reads SEKGDRALDSFMKGR.

It belongs to the CRELD family.

It localises to the membrane. It catalyses the reaction Catalyzes the rearrangement of -S-S- bonds in proteins.. Its function is as follows. Protein disulfide isomerase. Promotes the localization of acetylcholine receptors (AChRs) to the plasma membrane. This Xenopus tropicalis (Western clawed frog) protein is Protein disulfide isomerase CRELD1 (creld1).